We begin with the raw amino-acid sequence, 474 residues long: PRAME family member 13 (474 aa).

The stretch at 97-124 is one LRR 1; degenerate repeat; it reads RRKLQVLDLRDVDENFWARWPGAWALSC. The LRR 2; degenerate repeat unit spans residues 179-203; the sequence is HLCCSKLVNYLTPIKHLRKSLKIIY. The stretch at 204–230 is one LRR 3; degenerate repeat; the sequence is LNSIQELEIHNMSWPRLIRKLRCYLKE. Residues 231 to 265 form an LRR 4; degenerate repeat; sequence MKTLGKLVFSRCHHSTSDNELEGRLVTKFSSVFLG. LRR repeat units lie at residues 266–291, 292–323, 324–342, 348–375, and 376–400; these read LEHL…IRCL, QNPL…GYLK, HLNL…PLGA, AASL…GLSR, and CSQL…LLRH.

The protein belongs to the PRAME family.

In Homo sapiens (Human), this protein is PRAME family member 13.